Consider the following 217-residue polypeptide: Chorionic somatomammotropin hormone 2 (217 aa).

Positions 1 to 26 are cleaved as a signal peptide; it reads MAAGSRTSLLLAFALLCLPWLQEAGA. Histidine 44 contributes to the Zn(2+) binding site. Cysteine 79 and cysteine 191 are joined by a disulfide. A Zn(2+)-binding site is contributed by glutamate 200. A disulfide bridge connects residues cysteine 208 and cysteine 215.

Belongs to the somatotropin/prolactin family. As to quaternary structure, can be found in a monomeric as well as dimeric form.

Its subcellular location is the secreted. Functionally, produced only during pregnancy and is involved in stimulating lactation, fetal growth and metabolism. Does not interact with GHR but only activates PRLR through zinc-induced dimerization. The protein is Chorionic somatomammotropin hormone 2 (CSH2) of Homo sapiens (Human).